The sequence spans 612 residues: UvrABC system protein C (612 aa).

Positions 15–93 (HLPGVYRMYD…IKQHQPKYNV (79 aa)) constitute a GIY-YIG domain. Positions 203 to 238 (SQVIDYLMQKMEIAASELDFETAARFRDQIQSVRAV) constitute a UVR domain.

Belongs to the UvrC family. Interacts with UvrB in an incision complex.

It is found in the cytoplasm. Its function is as follows. The UvrABC repair system catalyzes the recognition and processing of DNA lesions. UvrC both incises the 5' and 3' sides of the lesion. The N-terminal half is responsible for the 3' incision and the C-terminal half is responsible for the 5' incision. This Haemophilus ducreyi (strain 35000HP / ATCC 700724) protein is UvrABC system protein C.